A 1377-amino-acid chain; its full sequence is DNA-directed RNA polymerase subunit beta'' (1377 aa).

Residues Cys-224, Cys-294, Cys-301, and Cys-304 each coordinate Zn(2+).

The protein belongs to the RNA polymerase beta' chain family. RpoC2 subfamily. As to quaternary structure, in plastids the minimal PEP RNA polymerase catalytic core is composed of four subunits: alpha, beta, beta', and beta''. When a (nuclear-encoded) sigma factor is associated with the core the holoenzyme is formed, which can initiate transcription. Zn(2+) serves as cofactor.

It is found in the plastid. Its subcellular location is the chloroplast. The catalysed reaction is RNA(n) + a ribonucleoside 5'-triphosphate = RNA(n+1) + diphosphate. In terms of biological role, DNA-dependent RNA polymerase catalyzes the transcription of DNA into RNA using the four ribonucleoside triphosphates as substrates. This is DNA-directed RNA polymerase subunit beta'' from Calycanthus floridus var. glaucus (Eastern sweetshrub).